Reading from the N-terminus, the 144-residue chain is Large ribosomal subunit protein uL11m (144 aa).

Residues 1–32 (MASTRTTIIKLIVPAGKATPTPPIGPALGARG) constitute a mitochondrion transit peptide.

This sequence belongs to the universal ribosomal protein uL11 family. Component of the mitochondrial large ribosomal subunit (mt-LSU). Mature yeast 74S mitochondrial ribosomes consist of a small (37S) and a large (54S) subunit. The 37S small subunit contains a 15S ribosomal RNA (15S mt-rRNA) and at least 32 different proteins. The 54S large subunit contains a 21S rRNA (21S mt-rRNA) and at least 45 different proteins.

It localises to the mitochondrion. Its subcellular location is the cytoplasm. Component of the mitochondrial ribosome (mitoribosome), a dedicated translation machinery responsible for the synthesis of mitochondrial genome-encoded proteins, including at least some of the essential transmembrane subunits of the mitochondrial respiratory chain. The mitoribosomes are attached to the mitochondrial inner membrane and translation products are cotranslationally integrated into the membrane. The protein is Large ribosomal subunit protein uL11m of Schizosaccharomyces pombe (strain 972 / ATCC 24843) (Fission yeast).